The sequence spans 1813 residues: Nonribosomal peptide synthetase 1 (1813 aa).

The interval glutamate 89 to arginine 494 is adenylation. The region spanning glutamate 624–aspartate 699 is the Carrier 1 domain. O-(pantetheine 4'-phosphoryl)serine is present on serine 660. Residues aspartate 738–glutamate 1159 are condensation 1. Positions glutamine 1282–leucine 1358 constitute a Carrier 2 domain. An O-(pantetheine 4'-phosphoryl)serine modification is found at serine 1319. Residues phenylalanine 1427–glutamate 1806 are condensation 2.

The protein belongs to the NRP synthetase family.

The protein operates within siderophore biosynthesis. Functionally, nonribosomal peptide synthetase; part of the gene cluster that mediates the biosynthesis of hydroxamate-containing siderophores that play a critical role in virulence via intracellular iron acquisition during macrophage infection. This is Nonribosomal peptide synthetase 1 from Ajellomyces capsulatus (Darling's disease fungus).